A 234-amino-acid polypeptide reads, in one-letter code: SPX domain-containing protein 6 (234 aa).

An SPX domain is found at 1–137 (MKFGKLLKRQ…GGALAAPVAE (137 aa)). The disordered stretch occupies residues 202–234 (GSSTHGRHSLPPLTLPDSDWLRSFQPPSPIPIQ).

In terms of tissue distribution, predominantly expressed in roots and leaves.

Its function is as follows. May be involved in maintaining cellular Pi homeostasis when plants are exposed to an external change in Pi. This Oryza sativa subsp. japonica (Rice) protein is SPX domain-containing protein 6.